Consider the following 78-residue polypeptide: Defensin-like protein 287 (78 aa).

The N-terminal stretch at 1 to 24 (MNNLRVIMSVLLAVLVFTATVSES) is a signal peptide. Cystine bridges form between C39/C59, C45/C64, and C51/C66.

This sequence belongs to the DEFL family.

The protein localises to the secreted. The sequence is that of Defensin-like protein 287 from Arabidopsis thaliana (Mouse-ear cress).